Reading from the N-terminus, the 429-residue chain is Antho-RFamide neuropeptides type 2 (429 aa).

The N-terminal stretch at 1-22 (MTTVSYVTILLTVLVQVLTSDA) is a signal peptide. Positions 23-233 (KATNNKRELS…EFQGRFGRED (211 aa)) are excised as a propeptide. The segment covering 230–371 (GREDQGRFGR…EDIAKEDQGR (142 aa)) has biased composition (basic and acidic residues). Residues 230–429 (GREDQGRFGR…KSDDALAKIS (200 aa)) are disordered. At glutamine 234 the chain carries Pyrrolidone carboxylic acid. Phenylalanine 237 bears the Phenylalanine amide mark. The propeptide occupies 239–241 (RED). A Pyrrolidone carboxylic acid modification is found at glutamine 242. Phenylalanine 245 is subject to Phenylalanine amide. The propeptide occupies 247 to 249 (RED). Residue glutamine 250 is modified to Pyrrolidone carboxylic acid. Phenylalanine 253 bears the Phenylalanine amide mark. The propeptide occupies 255-257 (RED). Position 258 is a pyrrolidone carboxylic acid (glutamine 258). Phenylalanine amide is present on phenylalanine 261. The propeptide occupies 263–265 (RED). Glutamine 266 is modified (pyrrolidone carboxylic acid). A Phenylalanine amide modification is found at phenylalanine 269. Residues 271 to 273 (RED) constitute a propeptide that is removed on maturation. Pyrrolidone carboxylic acid is present on glutamine 274. Position 277 is a phenylalanine amide (phenylalanine 277). The propeptide occupies 279–289 (RELQGRFGRED). Glutamine 290 bears the Pyrrolidone carboxylic acid mark. A Phenylalanine amide modification is found at phenylalanine 293. The propeptide occupies 295-297 (RED). Glutamine 298 is modified (pyrrolidone carboxylic acid). A Phenylalanine amide modification is found at phenylalanine 301. A propeptide spanning residues 303 to 305 (RED) is cleaved from the precursor. Pyrrolidone carboxylic acid is present on glutamine 306. Phenylalanine 309 is subject to Phenylalanine amide. A propeptide spanning residues 311 to 321 (RELQGRFGRED) is cleaved from the precursor. The residue at position 322 (glutamine 322) is a Pyrrolidone carboxylic acid. Phenylalanine amide is present on phenylalanine 325. A propeptide spanning residues 327-329 (RED) is cleaved from the precursor. Glutamine 330 carries the post-translational modification Pyrrolidone carboxylic acid. Residue phenylalanine 333 is modified to Phenylalanine amide. The propeptide occupies 335–342 (REDLAKED). At glutamine 343 the chain carries Pyrrolidone carboxylic acid. Phenylalanine 346 carries the post-translational modification Phenylalanine amide. Residues 348 to 355 (REDLAKED) constitute a propeptide that is removed on maturation. At glutamine 356 the chain carries Pyrrolidone carboxylic acid. Phenylalanine 359 is subject to Phenylalanine amide. A propeptide spanning residues 361 to 368 (REDIAKED) is cleaved from the precursor. Glutamine 369 is subject to Pyrrolidone carboxylic acid. Phenylalanine 372 carries the phenylalanine amide modification. Residues 374 to 429 (RNAAAAAKKRTIDVIDIESDPKPQTRFRDGKDMQEKRKVEKKDKIEKSDDALAKIS) constitute a propeptide that is removed on maturation. Residues 392 to 429 (SDPKPQTRFRDGKDMQEKRKVEKKDKIEKSDDALAKIS) show a composition bias toward basic and acidic residues.

It belongs to the FARP (FMRFamide related peptide) family.

It is found in the secreted. Its function is as follows. Not known but it could act as a transmitter at neuromuscular synapses. This Anthopleura elegantissima (Green aggregating anemone) protein is Antho-RFamide neuropeptides type 2.